The following is a 136-amino-acid chain: HTH-type transcriptional regulator CysB (136 aa).

In terms of domain architecture, HTH lysR-type spans 1–59; that stretch reads MDVRQLRSLVTLVEVRFSVSRAAECLHLVQSAVTQHLKQLEAELGTRLFVRHGKRLVGL. The segment at residues 19 to 38 is a DNA-binding region (H-T-H motif); it reads VSRAAECLHLVQSAVTQHLK.

This sequence belongs to the LysR transcriptional regulatory family.

Functionally, this protein is a positive regulator of gene expression for the cysteine regulon. The protein is HTH-type transcriptional regulator CysB (cysB) of Thiocapsa roseopersicina.